Reading from the N-terminus, the 98-residue chain is NADH-ubiquinone oxidoreductase chain 4L (98 aa).

The next 3 membrane-spanning stretches (helical) occupy residues 1 to 21 (MTPT…GLTF), 26 to 46 (LLSA…SMAL), and 59 to 79 (APML…ALLV).

The protein belongs to the complex I subunit 4L family. As to quaternary structure, core subunit of respiratory chain NADH dehydrogenase (Complex I) which is composed of 45 different subunits.

The protein resides in the mitochondrion inner membrane. It carries out the reaction a ubiquinone + NADH + 5 H(+)(in) = a ubiquinol + NAD(+) + 4 H(+)(out). Core subunit of the mitochondrial membrane respiratory chain NADH dehydrogenase (Complex I) which catalyzes electron transfer from NADH through the respiratory chain, using ubiquinone as an electron acceptor. Part of the enzyme membrane arm which is embedded in the lipid bilayer and involved in proton translocation. This chain is NADH-ubiquinone oxidoreductase chain 4L (mt-nd4l), found in Danio rerio (Zebrafish).